The chain runs to 163 residues: Disulfide bond formation protein B (163 aa).

Residues 1–9 (MRLASPRSL) lie on the Cytoplasmic side of the membrane. The helical transmembrane segment at 10–26 (FVIAFLGSALLIAIALY) threads the bilayer. Residues 27–44 (MEHVMGLAPCPLCIVQRI) are Periplasmic-facing. The cysteines at positions 36 and 39 are disulfide-linked. Residues 45–61 (CVIGFGLVCLVAAIHGP) form a helical membrane-spanning segment. Over 62–67 (AKVGRR) the chain is Cytoplasmic. Residues 68–85 (VYAAIAALFVAAGAATAI) form a helical membrane-spanning segment. The Periplasmic segment spans residues 86-142 (RQIWLQSVPADQLPSCLPSLEYMMEALPFQEIARLVLHGTAECAEVSWTMLGMSIPE). The cysteines at positions 101 and 128 are disulfide-linked. The helical transmembrane segment at 143–161 (WSLLGFIGMAIVCLWQLLR) threads the bilayer. Residues 162 to 163 (RD) are Cytoplasmic-facing.

It belongs to the DsbB family.

The protein localises to the cell inner membrane. Functionally, required for disulfide bond formation in some periplasmic proteins. Acts by oxidizing the DsbA protein. The sequence is that of Disulfide bond formation protein B from Stutzerimonas stutzeri (strain A1501) (Pseudomonas stutzeri).